Here is a 591-residue protein sequence, read N- to C-terminus: L-fucose isomerase (591 aa).

Residues Glu337 and Asp361 each act as proton acceptor in the active site. Glu337, Asp361, and His528 together coordinate Mn(2+).

The protein belongs to the L-fucose isomerase family. Homohexamer. The cofactor is Mn(2+).

It is found in the cytoplasm. It carries out the reaction L-fucose = L-fuculose. It functions in the pathway carbohydrate degradation; L-fucose degradation; L-lactaldehyde and glycerone phosphate from L-fucose: step 1/3. Converts the aldose L-fucose into the corresponding ketose L-fuculose. This chain is L-fucose isomerase, found in Escherichia coli O6:K15:H31 (strain 536 / UPEC).